A 287-amino-acid chain; its full sequence is Elongation factor Ts (287 aa).

The segment at 80–83 (TDFL) is involved in Mg(2+) ion dislocation from EF-Tu.

Belongs to the EF-Ts family.

It is found in the cytoplasm. Associates with the EF-Tu.GDP complex and induces the exchange of GDP to GTP. It remains bound to the aminoacyl-tRNA.EF-Tu.GTP complex up to the GTP hydrolysis stage on the ribosome. The protein is Elongation factor Ts of Stutzerimonas stutzeri (strain A1501) (Pseudomonas stutzeri).